The sequence spans 668 residues: Cyclin-dependent kinase 11.2 (668 aa).

Positions 1-265 (MSNYSTNGSR…EQWESMTENE (265 aa)) are disordered. 3 stretches are compositionally biased toward basic and acidic residues: residues 35-73 (KTKE…DHRD), 85-127 (YCRD…DSLR), and 140-163 (LPDD…KTVM). Positions 164–181 (EVEDVEMSPVEMLDEEEV) are enriched in acidic residues. 2 stretches are compositionally biased toward basic and acidic residues: residues 197 to 212 (NEPE…DPES) and 245 to 265 (PDDK…TENE). Positions 304–600 (YVILNVIAEG…ASEALQHDWF (297 aa)) constitute a Protein kinase domain. Residues 310 to 318 (IAEGTYGEV) and Lys-333 contribute to the ATP site. Asp-432 functions as the Proton acceptor in the catalytic mechanism.

Belongs to the protein kinase superfamily. CMGC Ser/Thr protein kinase family. CDC2/CDKX subfamily. In terms of tissue distribution, expressed in somatic cells and at varying levels throughout the germline (at protein level). Highly expressed in the germ line of hermaphrodites (at protein level).

Its subcellular location is the nucleus. The protein localises to the cytoplasm. It carries out the reaction L-seryl-[protein] + ATP = O-phospho-L-seryl-[protein] + ADP + H(+). The catalysed reaction is L-threonyl-[protein] + ATP = O-phospho-L-threonyl-[protein] + ADP + H(+). Probable cyclin-dependent kinase whose activity is most likely regulated by the cyclin cyl-1/Cylin-L. Acts partially redundantly with cdk-11.1 to ensure embryonic viability. In contrast to cdk-11.1, not essential for male and female fertility. The polypeptide is Cyclin-dependent kinase 11.2 (Caenorhabditis elegans).